Consider the following 435-residue polypeptide: Ribulose bisphosphate carboxylase large chain (435 aa).

Residues N104 and T154 each coordinate substrate. K156 serves as the catalytic Proton acceptor. Residue K158 participates in substrate binding. Residues K182, D184, and E185 each contribute to the Mg(2+) site. K182 carries the post-translational modification N6-carboxylysine. Catalysis depends on H275, which acts as the Proton acceptor. Residues R276, H308, and S360 each coordinate substrate.

The protein belongs to the RuBisCO large chain family. Type I subfamily. Heterohexadecamer of 8 large chains and 8 small chains. Mg(2+) is required as a cofactor.

The protein resides in the plastid. The protein localises to the chloroplast. It catalyses the reaction 2 (2R)-3-phosphoglycerate + 2 H(+) = D-ribulose 1,5-bisphosphate + CO2 + H2O. The catalysed reaction is D-ribulose 1,5-bisphosphate + O2 = 2-phosphoglycolate + (2R)-3-phosphoglycerate + 2 H(+). Functionally, ruBisCO catalyzes two reactions: the carboxylation of D-ribulose 1,5-bisphosphate, the primary event in carbon dioxide fixation, as well as the oxidative fragmentation of the pentose substrate in the photorespiration process. Both reactions occur simultaneously and in competition at the same active site. The sequence is that of Ribulose bisphosphate carboxylase large chain from Euglena pisciformis.